Reading from the N-terminus, the 721-residue chain is Sodium/hydrogen exchanger 6 (721 aa).

Residues 1 to 44 (MTSPKPWARSAGSCQTQRAVRTRKKECREEGESDTEKGPAASSA) are disordered. Residues 26–37 (ECREEGESDTEK) show a composition bias toward basic and acidic residues. 12 helical membrane passes run 91-111 (SANL…IWLF), 123-143 (GLAM…IHVP), 196-216 (VTFD…FYAG), 231-251 (ILAY…SIMY), 272-292 (CLLF…AIFH), 298-318 (VELY…AIVL), 344-364 (IGIF…TGVV), 388-412 (MSWS…FCGI), 434-454 (FELL…LTLF), 456-476 (FQNH…IFLG), 499-519 (NFQH…ALAI), and 535-555 (LLIV…MLSC).

The protein belongs to the monovalent cation:proton antiporter 1 (CPA1) transporter (TC 2.A.36) family. Homodimer. Interacts with RACK1; regulates the distribution of SLC9A6 between endosomes and the plasma membrane. Post-translationally, ubiquitinated (in vitro). Glycosylated.

It localises to the endosome membrane. It is found in the recycling endosome membrane. The protein resides in the early endosome membrane. The protein localises to the late endosome membrane. Its subcellular location is the cell membrane. It carries out the reaction Na(+)(in) + H(+)(out) = Na(+)(out) + H(+)(in). The catalysed reaction is K(+)(in) + H(+)(out) = K(+)(out) + H(+)(in). Functionally, endosomal Na(+), K(+)/H(+) antiporter. Mediates the electroneutral exchange of endosomal luminal H(+) for a cytosolic Na(+) or K(+). By facilitating proton efflux, SLC9A6 counteracts the acidity generated by vacuolar (V)-ATPase, thereby limiting luminal acidification. Responsible for alkalizing and maintaining the endosomal pH, and consequently in, e.g., endosome maturation and trafficking of recycling endosomal cargo. Plays a critical role during neurodevelopment by regulating synaptic development and plasticity. Implicated in the maintenance of cell polarity in a manner that is dependent on its ability to modulate intravesicular pH. Regulates intracelular pH in some specialized cells, osteoclasts and stereocilia where this transporter localizes to the plasma membrane. The protein is Sodium/hydrogen exchanger 6 of Rattus norvegicus (Rat).